A 303-amino-acid chain; its full sequence is Zinc transporter ZIP9 (303 aa).

A helical transmembrane segment spans residues 7-27 (ISLLSLAMLVGCYVSGIIPLA). N-linked (GlcNAc...) asparagine glycosylation occurs at asparagine 29. The next 5 membrane-spanning stretches (helical) occupy residues 35–55 (LKLVTVLGAGLLCGTALAVIV), 102–122 (AYIGVSLVLGFVFMLLVDQIG), 142–162 (ITTTLGLVVHAAADGVALGAA), 172–192 (LIVFVAIMLHKAPAAFGLVSF), and 206–226 (HLLVFALAAPVLSMLTYLGLS). The N-linked (GlcNAc...) asparagine glycan is linked to asparagine 237. 2 helical membrane-spanning segments follow: residues 240 to 260 (GVAMLFSAGTFLYVATVHVLP) and 282 to 302 (LEVCALVLGCLIPLVLSIGHQ).

This sequence belongs to the ZIP transporter (TC 2.A.5) family.

It is found in the golgi apparatus. The protein localises to the trans-Golgi network membrane. Its subcellular location is the cell membrane. The protein resides in the cytoplasm. It localises to the perinuclear region. It is found in the mitochondrion. The protein localises to the nucleus. The enzyme catalyses Zn(2+)(in) = Zn(2+)(out). Functionally, transports zinc ions across cell and organelle membranes into the cytoplasm and regulates intracellular zinc homeostasis. Participates in the zinc ions efflux out of the secretory compartments. Also functions as a membrane androgen receptor that mediates, through a G protein, the non-classical androgen signaling pathway, characterized by the activation of MAPK3/MAPK1 (Erk1/2) and transcription factors CREB1 or ATF1. Moreover, has dual functions as a membrane-bound androgen receptor and as an androgen-dependent zinc transporter both of which are mediated through an inhibitory G protein (Gi) that mediates both MAP kinase and zinc signaling leading to the androgen-dependent apoptotic process. In Xenopus tropicalis (Western clawed frog), this protein is Zinc transporter ZIP9.